Consider the following 229-residue polypeptide: Phosphatidylinositol N-acetylglucosaminyltransferase subunit GPI15 (229 aa).

The next 2 helical transmembrane spans lie at Ile59–Leu79 and Ile101–Val121.

This sequence belongs to the PIGH family. As to quaternary structure, component of the phosphatidylinositol N-acetylglucosaminyltransferase (GPI-GlcNAc transferase) complex composed of at least GPI1, GPI2, GPI3, GPI15, GPI19 and ERI1.

It localises to the membrane. It catalyses the reaction a 1,2-diacyl-sn-glycero-3-phospho-(1D-myo-inositol) + UDP-N-acetyl-alpha-D-glucosamine = a 6-(N-acetyl-alpha-D-glucosaminyl)-1-(1,2-diacyl-sn-glycero-3-phospho)-1D-myo-inositol + UDP + H(+). The protein operates within glycolipid biosynthesis; glycosylphosphatidylinositol-anchor biosynthesis. Its function is as follows. Part of the complex catalyzing the transfer of N-acetylglucosamine from UDP-N-acetylglucosamine to phosphatidylinositol, the first step of GPI biosynthesis. This Saccharomyces cerevisiae (strain ATCC 204508 / S288c) (Baker's yeast) protein is Phosphatidylinositol N-acetylglucosaminyltransferase subunit GPI15 (GPI15).